A 231-amino-acid chain; its full sequence is uncharacterized protein (231 aa).

10 to 34 (VVTGAGSGIGEAIATLLHEEGAKVV) provides a ligand contact to NADP(+). S140 contributes to the substrate binding site. Catalysis depends on Y153, which acts as the Proton acceptor.

The protein belongs to the short-chain dehydrogenases/reductases (SDR) family.

This is an uncharacterized protein from Staphylococcus aureus (strain MW2).